A 165-amino-acid chain; its full sequence is V-type proton ATPase 16 kDa proteolipid subunit (165 aa).

The Lumenal portion of the chain corresponds to 1-10 (MSSTFSGDET). A helical membrane pass occupies residues 11–33 (APFFGFLGAAAALVFSCMGAAYG). At 34–55 (TAKSGVGVASMGVMRPELVMKS) the chain is on the cytoplasmic side. A helical membrane pass occupies residues 56–76 (IVPVVMAGVLGIYGLIIAVII). Residues 77–95 (STGINPKAKSYYLFDGYAH) lie on the Lumenal side of the membrane. The helical transmembrane segment at 96 to 117 (LSSGLACGLAGLSAGMAIGIVG) threads the bilayer. At 118-129 (DAGVRANAQQPK) the chain is on the cytoplasmic side. A helical membrane pass occupies residues 130–155 (LFVGMILILIFAEALALYGLIVGIIL). Topologically, residues 156-165 (SSRAGQSRAD) are lumenal.

It belongs to the V-ATPase proteolipid subunit family. In terms of assembly, V-ATPase is a heteromultimeric enzyme composed of a peripheral catalytic V1 complex (main components: subunits A, B, C, D, E, and F) attached to an integral membrane V0 proton pore complex (main component: the proteolipid protein; which is present as a hexamer that forms the proton-conducting pore). Higher expression in leaves, followed by roots and weakly in flowers. Expression in leaves is light-dependent.

It localises to the vacuole membrane. In terms of biological role, proton-conducting pore forming subunit of the membrane integral V0 complex of vacuolar ATPase. V-ATPase is responsible for acidifying a variety of intracellular compartments in eukaryotic cells. Necessary for the crassulacean acid metabolism. In Kalanchoe daigremontiana (Devil's backbone), this protein is V-type proton ATPase 16 kDa proteolipid subunit.